Here is a 115-residue protein sequence, read N- to C-terminus: MKFFYLIFSAIFFLADPALVKCSEDCENIFHDNAYLLKLDCEAGRVDPVEYDDISDEEIYEITVDVGVSSEDQEKVAKIIRECIAQVSTQDCTKFSEIYDCYMKKKICNYYPENM.

An N-terminal signal peptide occupies residues 1–22 (MKFFYLIFSAIFFLADPALVKC). 3 disulfide bridges follow: Cys-26–Cys-108, Cys-41–Cys-92, and Cys-83–Cys-101.

In terms of assembly, may form multimers. Salivary gland (at protein level).

It localises to the secreted. Its function is as follows. Salivary protein that inhibits the classical pathway of complement system activation in the host while having no inhibitory effect on the alternative or lectin pathways. Prevent cleavage of host C4 and consequently impairs the activation of factors downstream of C4b in the complement cascade. The polypeptide is Salivary anti-complement protein (Lutzomyia longipalpis (Sand fly)).